The primary structure comprises 847 residues: Beta-galactosidase 1 (847 aa).

An N-terminal signal peptide occupies residues 1–32; sequence MGSKPNAMKNVVAMAAVSALFLLGFLVCSVSG. The active-site Proton donor is the Glu190. Glu259 functions as the Nucleophile in the catalytic mechanism. Asn469 carries an N-linked (GlcNAc...) asparagine glycan. The SUEL-type lectin domain maps to 761 to 847; it reads KPLHPKAHLQ…KKLAVEAVCA (87 aa).

It belongs to the glycosyl hydrolase 35 family. Ubiquitous, at low levels.

It localises to the secreted. It is found in the extracellular space. The protein resides in the apoplast. It catalyses the reaction Hydrolysis of terminal non-reducing beta-D-galactose residues in beta-D-galactosides.. In Arabidopsis thaliana (Mouse-ear cress), this protein is Beta-galactosidase 1 (BGAL1).